We begin with the raw amino-acid sequence, 66 residues long: Beta-toxin Cb2 (66 aa).

One can recognise an LCN-type CS-alpha/beta domain in the interval 1–66; sequence KEGYLVDLHT…VWPLPNKRCK (66 aa). Intrachain disulfides connect cysteine 12–cysteine 65, cysteine 16–cysteine 41, cysteine 25–cysteine 46, and cysteine 29–cysteine 48.

The protein belongs to the long (4 C-C) scorpion toxin superfamily. Sodium channel inhibitor family. Beta subfamily. Expressed by the venom gland.

The protein localises to the secreted. Beta toxins bind voltage-independently at site-4 of sodium channels (Nav) and reduces peak current and shifts the voltage of activation toward more negative potentials thereby affecting sodium channel activation and promoting spontaneous and repetitive firing. Has an inhibitory effect on voltage-gated sodium channel hNav1.6/SCN8A, affecting both the activation and inactivation processes. Also reduces the peak current of hNav1.5/SCN5A but does not shift its voltage of activation. This toxin is active against mammals and lethal to mice. In Centruroides baergi (Scorpion), this protein is Beta-toxin Cb2.